A 122-amino-acid chain; its full sequence is Small ribosomal subunit protein uS13 (122 aa).

The tract at residues 95-122 (SLPCRGQRTSTNARTRKGPKRAAVKKKK) is disordered. A compositionally biased stretch (basic residues) spans 108–122 (RTRKGPKRAAVKKKK).

This sequence belongs to the universal ribosomal protein uS13 family. In terms of assembly, part of the 30S ribosomal subunit. Forms a loose heterodimer with protein S19. Forms two bridges to the 50S subunit in the 70S ribosome.

In terms of biological role, located at the top of the head of the 30S subunit, it contacts several helices of the 16S rRNA. In the 70S ribosome it contacts the 23S rRNA (bridge B1a) and protein L5 of the 50S subunit (bridge B1b), connecting the 2 subunits; these bridges are implicated in subunit movement. Contacts the tRNAs in the A and P-sites. This is Small ribosomal subunit protein uS13 from Desulforapulum autotrophicum (strain ATCC 43914 / DSM 3382 / VKM B-1955 / HRM2) (Desulfobacterium autotrophicum).